Reading from the N-terminus, the 572-residue chain is Methionine--tRNA ligase (572 aa).

The 'HIGH' region signature appears at 11-21; that stretch reads PYINGVKHLGN. Residues C143, C146, C156, and C159 each contribute to the Zn(2+) site. Positions 341-345 match the 'KMSKS' region motif; it reads KFSTS. Position 344 (T344) interacts with ATP.

This sequence belongs to the class-I aminoacyl-tRNA synthetase family. MetG type 1 subfamily. Monomer. Requires Zn(2+) as cofactor.

It localises to the cytoplasm. The enzyme catalyses tRNA(Met) + L-methionine + ATP = L-methionyl-tRNA(Met) + AMP + diphosphate. In terms of biological role, is required not only for elongation of protein synthesis but also for the initiation of all mRNA translation through initiator tRNA(fMet) aminoacylation. In Maricaulis maris (strain MCS10) (Caulobacter maris), this protein is Methionine--tRNA ligase.